Here is a 302-residue protein sequence, read N- to C-terminus: HTH-type transcriptional regulator AlsR (302 aa).

One can recognise an HTH lysR-type domain in the interval 1-58 (MELRHLQYFIAVAEELHFGKAARRLNMTQPPLSQQIKQLEEEVGVTLLKRTKRFVELT). Positions 18-37 (FGKAARRLNMTQPPLSQQIK) form a DNA-binding region, H-T-H motif.

This sequence belongs to the LysR transcriptional regulatory family.

Functionally, regulates the expression of the alsSD operon for acetoin biosynthesis. This Bacillus subtilis (strain 168) protein is HTH-type transcriptional regulator AlsR (alsR).